A 77-amino-acid chain; its full sequence is Conotoxin ArMKLT2-022 (77 aa).

The N-terminal stretch at 1–22 is a signal peptide; sequence MKLTCVLIVAVLFLTACQLIAA. The propeptide occupies 23–46; sequence DDSRDLKRFSRRKMRDGMLNTKNT. The residue at position 49 (Gln49) is a Pyrrolidone carboxylic acid. Cystine bridges form between Cys50/Cys65, Cys57/Cys68, and Cys64/Cys73.

The protein belongs to the conotoxin O1 superfamily. In terms of tissue distribution, expressed by the venom duct.

The protein localises to the secreted. This Conus arenatus (Sand-dusted cone) protein is Conotoxin ArMKLT2-022.